Consider the following 172-residue polypeptide: MALDLRNYIASIENYPEEGIVFRDISPLMADGEAYRQATDRIVQFAKDKGVEMIVGPEARGFIVGCPVAYELGVGFAPARKKGKLPRETVKADYSLEYGTASLYMHKDAVKPGQKVLVTDDLLATGGTIGATIDLVEQLGGVVVGCAFIIELEDLHGRDKIKGYDTLALMKY.

It belongs to the purine/pyrimidine phosphoribosyltransferase family. In terms of assembly, homodimer.

It is found in the cytoplasm. The catalysed reaction is AMP + diphosphate = 5-phospho-alpha-D-ribose 1-diphosphate + adenine. It functions in the pathway purine metabolism; AMP biosynthesis via salvage pathway; AMP from adenine: step 1/1. In terms of biological role, catalyzes a salvage reaction resulting in the formation of AMP, that is energically less costly than de novo synthesis. This is Adenine phosphoribosyltransferase from Ligilactobacillus salivarius (strain UCC118) (Lactobacillus salivarius).